A 485-amino-acid polypeptide reads, in one-letter code: UDP-glycosyltransferase 91D1 (485 aa).

Residues Ser296, 355-356, 373-381, and 395-398 contribute to the UDP-alpha-D-glucose site; these read WA, HCGSGSIVE, and FCDQ.

It belongs to the UDP-glycosyltransferase family.

Its function is as follows. May glycosylate diterpenes or flavonols in leaves. This chain is UDP-glycosyltransferase 91D1, found in Stevia rebaudiana (Stevia).